Reading from the N-terminus, the 416-residue chain is Gamma-glutamyl phosphate reductase (416 aa).

This sequence belongs to the gamma-glutamyl phosphate reductase family.

It is found in the cytoplasm. The enzyme catalyses L-glutamate 5-semialdehyde + phosphate + NADP(+) = L-glutamyl 5-phosphate + NADPH + H(+). It participates in amino-acid biosynthesis; L-proline biosynthesis; L-glutamate 5-semialdehyde from L-glutamate: step 2/2. In terms of biological role, catalyzes the NADPH-dependent reduction of L-glutamate 5-phosphate into L-glutamate 5-semialdehyde and phosphate. The product spontaneously undergoes cyclization to form 1-pyrroline-5-carboxylate. In Salmonella heidelberg (strain SL476), this protein is Gamma-glutamyl phosphate reductase.